The following is a 253-amino-acid chain: 3-dehydroquinate dehydratase (253 aa).

3-dehydroquinate is bound by residues 46–48 (EWR) and arginine 82. Histidine 143 serves as the catalytic Proton donor/acceptor. Lysine 170 (schiff-base intermediate with substrate) is an active-site residue. 3-dehydroquinate-binding residues include arginine 213, serine 232, and glutamine 236.

Belongs to the type-I 3-dehydroquinase family. Homodimer.

The enzyme catalyses 3-dehydroquinate = 3-dehydroshikimate + H2O. The protein operates within metabolic intermediate biosynthesis; chorismate biosynthesis; chorismate from D-erythrose 4-phosphate and phosphoenolpyruvate: step 3/7. Functionally, involved in the third step of the chorismate pathway, which leads to the biosynthesis of aromatic amino acids. Catalyzes the cis-dehydration of 3-dehydroquinate (DHQ) and introduces the first double bond of the aromatic ring to yield 3-dehydroshikimate. This chain is 3-dehydroquinate dehydratase, found in Bacillus velezensis (strain DSM 23117 / BGSC 10A6 / LMG 26770 / FZB42) (Bacillus amyloliquefaciens subsp. plantarum).